Here is a 222-residue protein sequence, read N- to C-terminus: MAIMRVNPTRMELTRLKKRLQVARRGHKLLKDKLDELMKQFLDLVRKNKELREKVEEMLMKAHQDFLIARAVMSSEGLEAALMLPKQSISLDVSTQNIMSVEVPVLKFTTSSSDESDIYPYGFASTSGELDGAILTLSKVLPYMLELAQMEKSSQLLAQEIEKTRRRVNALEYVMIPQLTETIKYISMKLDENERGNITRLMKVKDMMLEQAHNFKEKLNEA.

This sequence belongs to the V-ATPase D subunit family.

Produces ATP from ADP in the presence of a proton gradient across the membrane. The protein is V-type ATP synthase subunit D of Acetivibrio thermocellus (strain ATCC 27405 / DSM 1237 / JCM 9322 / NBRC 103400 / NCIMB 10682 / NRRL B-4536 / VPI 7372) (Clostridium thermocellum).